A 432-amino-acid chain; its full sequence is Serine/threonine-protein kinase stk11 (432 aa).

The Protein kinase domain maps to 52–312; it reads YLMGDLLGEG…IQQIRQHNWF (261 aa). ATP contacts are provided by residues 58–66 and lysine 81; that span reads LGEGSYGKV. Aspartate 179 functions as the Proton acceptor in the catalytic mechanism. Threonine 192 is subject to Phosphothreonine; by autocatalysis. Positions 398 to 432 are disordered; it reads TESQLKTERRVSSSSQRKASTTGSKVRKLSACKQQ. Residues 409–421 are compositionally biased toward polar residues; sequence SSSSQRKASTTGS. The segment covering 422–432 has biased composition (basic residues); it reads KVRKLSACKQQ. Position 427 is a phosphoserine; by PKA (serine 427).

It belongs to the protein kinase superfamily. CAMK Ser/Thr protein kinase family. LKB1 subfamily. As to quaternary structure, catalytic component of a trimeric complex composed of STK11/LKB1, STRAD (STRADA or STRADB) and CAB39/MO25 (CAB39/MO25alpha or CAB39L/MO25beta). The cofactor is Mg(2+). It depends on Mn(2+) as a cofactor. Phosphorylated by a cAMP-dependent protein kinase. Autophosphorylated in a reaction that prefers Mn(2+) to Mg(2+). In terms of tissue distribution, oocytes, eggs and early embryos.

The protein localises to the nucleus. It is found in the cytoplasm. The enzyme catalyses L-seryl-[protein] + ATP = O-phospho-L-seryl-[protein] + ADP + H(+). It carries out the reaction L-threonyl-[protein] + ATP = O-phospho-L-threonyl-[protein] + ADP + H(+). Tumor suppressor serine/threonine-protein kinase that controls the activity of AMP-activated protein kinase (AMPK) family members, thereby playing a role in various processes such as cell metabolism, cell polarity, apoptosis and DNA damage response. Acts by phosphorylating the T-loop of AMPK family proteins, leading to promote their activity. The protein is Serine/threonine-protein kinase stk11 of Xenopus laevis (African clawed frog).